A 173-amino-acid chain; its full sequence is Phosphopantetheine adenylyltransferase (173 aa).

Ser9 lines the substrate pocket. ATP contacts are provided by residues 9-10 (SF) and His17. The substrate site is built by Lys41, Thr73, and Arg87. ATP-binding positions include 88 to 90 (GLR), Glu98, and 123 to 129 (YQHLSSS).

Belongs to the bacterial CoaD family. In terms of assembly, homohexamer. Mg(2+) serves as cofactor.

It is found in the cytoplasm. It carries out the reaction (R)-4'-phosphopantetheine + ATP + H(+) = 3'-dephospho-CoA + diphosphate. Its pathway is cofactor biosynthesis; coenzyme A biosynthesis; CoA from (R)-pantothenate: step 4/5. Reversibly transfers an adenylyl group from ATP to 4'-phosphopantetheine, yielding dephospho-CoA (dPCoA) and pyrophosphate. This Limosilactobacillus reuteri (strain DSM 20016) (Lactobacillus reuteri) protein is Phosphopantetheine adenylyltransferase.